A 442-amino-acid polypeptide reads, in one-letter code: Putative mannan endo-1,6-alpha-mannosidase C970.02 (442 aa).

A signal peptide spans 1-19; the sequence is MSLTIFISLATILFSFAEA. N-linked (GlcNAc...) asparagine glycosylation is found at Asn25, Asn82, Asn107, Asn131, Asn201, Asn236, Asn261, Asn264, Asn277, and Asn361.

This sequence belongs to the glycosyl hydrolase 76 family.

The catalysed reaction is Random hydrolysis of (1-&gt;6)-alpha-D-mannosidic linkages in unbranched (1-&gt;6)-mannans.. This is Putative mannan endo-1,6-alpha-mannosidase C970.02 from Schizosaccharomyces pombe (strain 972 / ATCC 24843) (Fission yeast).